The following is a 180-amino-acid chain: Ferric nitrobindin-like protein (180 aa).

Positions 21 to 27 match the GXWXGXG motif; the sequence is GRWEGAG.

It belongs to the nitrobindin family.

The protein is Ferric nitrobindin-like protein of Kineococcus radiotolerans (strain ATCC BAA-149 / DSM 14245 / SRS30216).